Consider the following 473-residue polypeptide: Adenosylhomocysteinase (473 aa).

Substrate is bound by residues threonine 64, aspartate 139, and glutamate 199. An NAD(+)-binding site is contributed by 200-202 (TTT). Residues lysine 229 and aspartate 233 each contribute to the substrate site. NAD(+) is bound by residues asparagine 234, 263 to 268 (GYGDVG), glutamate 286, asparagine 321, 342 to 344 (IGH), and asparagine 387.

It belongs to the adenosylhomocysteinase family. Requires NAD(+) as cofactor.

The protein localises to the cytoplasm. The catalysed reaction is S-adenosyl-L-homocysteine + H2O = L-homocysteine + adenosine. Its pathway is amino-acid biosynthesis; L-homocysteine biosynthesis; L-homocysteine from S-adenosyl-L-homocysteine: step 1/1. Functionally, may play a key role in the regulation of the intracellular concentration of adenosylhomocysteine. The sequence is that of Adenosylhomocysteinase from Burkholderia mallei (strain SAVP1).